Here is a 219-residue protein sequence, read N- to C-terminus: Cytidylate kinase (219 aa).

21–29 contacts ATP; it reads GPAASGKGT.

It belongs to the cytidylate kinase family. Type 1 subfamily.

The protein resides in the cytoplasm. It carries out the reaction CMP + ATP = CDP + ADP. The catalysed reaction is dCMP + ATP = dCDP + ADP. This chain is Cytidylate kinase, found in Rickettsia typhi (strain ATCC VR-144 / Wilmington).